A 365-amino-acid chain; its full sequence is Leu/Ile/Val/Thr-binding protein (365 aa).

Positions 1–21 (MKGKTLLAGCIALSLSHMAFA) are cleaved as a signal peptide. Cys-74 and Cys-99 form a disulfide bridge.

Belongs to the leucine-binding protein family.

The protein resides in the periplasm. This protein is a component of the leucine, isoleucine, valine, threonine transport system, which is one of the two periplasmic binding protein-dependent transport systems of the high-affinity transport of the branched-chain amino acids. The chain is Leu/Ile/Val/Thr-binding protein (livJ) from Salmonella typhimurium (strain LT2 / SGSC1412 / ATCC 700720).